The chain runs to 277 residues: Small ribosomal subunit protein uS2 (277 aa).

Positions 255–277 are disordered; that stretch reads AVATTDEASAPSAAATETTTEEG. Over residues 257 to 277 the composition is skewed to low complexity; sequence ATTDEASAPSAAATETTTEEG.

This sequence belongs to the universal ribosomal protein uS2 family.

The protein is Small ribosomal subunit protein uS2 of Mycobacteroides abscessus (strain ATCC 19977 / DSM 44196 / CCUG 20993 / CIP 104536 / JCM 13569 / NCTC 13031 / TMC 1543 / L948) (Mycobacterium abscessus).